Reading from the N-terminus, the 354-residue chain is Isopentenyl-diphosphate delta-isomerase (354 aa).

Substrate is bound at residue 6-7 (RK). FMN contacts are provided by residues 63-65 (AMT), Ser93, and Asn122. 93–95 (SQR) serves as a coordination point for substrate. A substrate-binding site is contributed by Gln160. Mg(2+) is bound at residue Glu161. FMN is bound by residues Lys192, Thr221, 273-275 (GIR), and 294-295 (SQ).

The protein belongs to the IPP isomerase type 2 family. As to quaternary structure, homooctamer. Dimer of tetramers. Requires FMN as cofactor. It depends on NADPH as a cofactor. Mg(2+) is required as a cofactor.

It is found in the cytoplasm. It catalyses the reaction isopentenyl diphosphate = dimethylallyl diphosphate. Functionally, involved in the biosynthesis of isoprenoids. Catalyzes the 1,3-allylic rearrangement of the homoallylic substrate isopentenyl (IPP) to its allylic isomer, dimethylallyl diphosphate (DMAPP). The polypeptide is Isopentenyl-diphosphate delta-isomerase (Pyrobaculum islandicum (strain DSM 4184 / JCM 9189 / GEO3)).